The primary structure comprises 203 residues: LexA repressor (203 aa).

The segment at residues 30 to 50 is a DNA-binding region (H-T-H motif); the sequence is VREICQAVSLKSTSTVHGHLK. Catalysis depends on for autocatalytic cleavage activity residues serine 127 and lysine 164.

It belongs to the peptidase S24 family. As to quaternary structure, homodimer.

It carries out the reaction Hydrolysis of Ala-|-Gly bond in repressor LexA.. Functionally, represses a number of genes involved in the response to DNA damage (SOS response), including recA and lexA. In the presence of single-stranded DNA, RecA interacts with LexA causing an autocatalytic cleavage which disrupts the DNA-binding part of LexA, leading to derepression of the SOS regulon and eventually DNA repair. This chain is LexA repressor, found in Clostridium perfringens (strain ATCC 13124 / DSM 756 / JCM 1290 / NCIMB 6125 / NCTC 8237 / Type A).